A 354-amino-acid polypeptide reads, in one-letter code: Membrane progestin receptor beta (354 aa).

Topologically, residues 1–75 (MTTAILQRLS…FFSLFQKHNE (75 aa)) are cytoplasmic. Residues 76 to 96 (VVNVWTHLLAALAVLLRFWAF) form a helical membrane-spanning segment. Residues 97-111 (VETEGLPWTSAHTLP) lie on the Extracellular side of the membrane. The chain crosses the membrane as a helical span at residues 112-132 (LLLYVLSSITYLTFSLLAHLL). Topologically, residues 133–174 (QSKSELSHYTFYFVDYVGVSVYQYGSALVHFFYASDQAWYER) are cytoplasmic. The chain crosses the membrane as a helical span at residues 175–195 (FWLFFLPAAAFCGWLSCTGCC). The Extracellular portion of the chain corresponds to 196-213 (YAKYRYRRPYPVMRKVCQ). The chain crosses the membrane as a helical span at residues 214–234 (VVPAGLAFILDISPVAHRVAL). Over 235–243 (CHLSGCQEQ) the chain is Cytoplasmic. The chain crosses the membrane as a helical span at residues 244–264 (AAWYHTLQIVFFLVSAYFFSC). Topologically, residues 265–283 (PVPEKYFPGSCDIVGHGHQ) are extracellular. A helical membrane pass occupies residues 284–304 (IFHAFLSICTLSQLEAILLDY). At 305–319 (KGRQEIFLHRHSPLS) the chain is on the cytoplasmic side. The chain crosses the membrane as a helical span at residues 320–340 (IYAACLSFFFLVACSGATAAL). Over 341-354 (LREKIKARLSKKDS) the chain is Extracellular.

This sequence belongs to the ADIPOR family.

Its subcellular location is the cell membrane. Functionally, steroid membrane receptor. Binds progesterone. May be involved in oocyte maturation. The sequence is that of Membrane progestin receptor beta (PAQR8) from Sus scrofa (Pig).